Reading from the N-terminus, the 312-residue chain is Olfactory receptor 6C2 (312 aa).

The Extracellular segment spans residues 1–23 (MKNHTVIRTFILLGLTGDPHLQV). N-linked (GlcNAc...) asparagine glycosylation occurs at Asn3. Residues 24 to 44 (LLFIFLFLTYMLSVTGNLTII) form a helical membrane-spanning segment. The Cytoplasmic portion of the chain corresponds to 45–52 (TLTLVDHH). Residues 53–73 (LKTPMYFFLRNFSFLEVSFTT) form a helical membrane-spanning segment. Residues 74 to 97 (VCIPRFLYNISMGDNTITYNACAS) lie on the Extracellular side of the membrane. Asn82 is a glycosylation site (N-linked (GlcNAc...) asparagine). A disulfide bridge connects residues Cys95 and Cys187. The chain crosses the membrane as a helical span at residues 98-118 (QIFFVILFGATEFFLLAAMSY). The Cytoplasmic portion of the chain corresponds to 119 to 137 (DRYVAICKPLHYVVIMNNR). A helical membrane pass occupies residues 138-158 (VCTLLVLCCWVAGLMIIVPPL). The Extracellular portion of the chain corresponds to 159–195 (SLGLQLEFCDSNAIDHFSCDAGPLLKISCSDTWVIEQ). Residues 196-215 (MVILMAVFALIITLVCVILS) form a helical membrane-spanning segment. Residues 216 to 235 (YLYIVRTILKFPSVQQRKKA) lie on the Cytoplasmic side of the membrane. The chain crosses the membrane as a helical span at residues 236–256 (FSTCSSHMIVVSIAYGSCIFI). The Extracellular portion of the chain corresponds to 257–269 (YIKPSAKDEVAIN). A helical membrane pass occupies residues 270–290 (KGVSVLTTSVAPLLNPFIYTL). Topologically, residues 291-312 (RNKQVKQAFSDSIKRIAFLSKK) are cytoplasmic.

The protein belongs to the G-protein coupled receptor 1 family.

Its subcellular location is the cell membrane. In terms of biological role, odorant receptor. The sequence is that of Olfactory receptor 6C2 (OR6C2) from Homo sapiens (Human).